We begin with the raw amino-acid sequence, 457 residues long: Glycine receptor subunit alpha-1 (457 aa).

Positions 1-28 are cleaved as a signal peptide; sequence MYSFNTLRFYLWETIVFFSLAASKEAEA. The Extracellular portion of the chain corresponds to 29–250; the sequence is ARSAPKPMSP…RFHLERQMGY (222 aa). N-linked (GlcNAc...) asparagine glycosylation occurs at N66. 2 residues coordinate glycine: R93 and S157. A disulfide bridge links C166 with C180. E220 and D222 together coordinate Zn(2+). C226 and C237 are disulfide-bonded. 230–235 lines the strychnine pocket; the sequence is YNTGKF. Position 232 (T232) interacts with glycine. Position 243 (H243) interacts with Zn(2+). A helical transmembrane segment spans residues 251 to 272; that stretch reads YLIQMYIPSLLIVILSWISFWI. The Cytoplasmic portion of the chain corresponds to 273–277; sequence NMDAA. Residues 278–298 form a helical membrane-spanning segment; it reads PARVGLGITTVLTMTTQSSGS. Topologically, residues 299–309 are extracellular; sequence RASLPKVSYVK. Residues 310 to 330 form a helical membrane-spanning segment; sequence AIDIWMAVCLLFVFSALLEYA. The Cytoplasmic portion of the chain corresponds to 331-425; the sequence is AVNFVSRQHK…FIQRAKKIDK (95 aa). Positions 391–410 are disordered; sequence KGANNNNTTNPPPAPSKSPE. Residues 426–446 form a helical membrane-spanning segment; it reads ISRIGFPMAFLIFNMFYWIIY. At 447–457 the chain is on the extracellular side; sequence KIVRREDVHNK.

Belongs to the ligand-gated ion channel (TC 1.A.9) family. Glycine receptor (TC 1.A.9.3) subfamily. GLRA1 sub-subfamily. In terms of assembly, interacts with GLRB to form heteropentameric channels; this is probably the predominant form in vivo. Heteropentamer composed of four GLRA1 subunits and one GLRB subunit. Heteropentamer composed of two GLRA1 and three GLRB. Heteropentamer composed of three GLRA1 and two GLRB. Homopentamer (in vitro). Both homopentamers and heteropentamers form functional ion channels, but their characteristics are subtly different. As to expression, detected in spinal cord neurons. Detected in brain stem neurons. Detected at lower levels in hippocampus and cerebellum. Detected in the inner plexiform layer of the retina (at protein level).

It is found in the postsynaptic cell membrane. It localises to the synapse. The protein localises to the perikaryon. Its subcellular location is the cell projection. The protein resides in the dendrite. It is found in the cell membrane. The catalysed reaction is chloride(in) = chloride(out). Its activity is regulated as follows. Channel opening is triggered by extracellular glycine. Channel characteristics depend on the subunit composition; heteropentameric channels are activated by lower glycine levels and display faster desensitization. Channel opening is also triggered by taurine and beta-alanine. Inhibited by strychnine. Strychnine binding locks the channel in a closed conformation and prevents channel opening in response to extracellular glycine. Inhibited by picrotoxin. Channel activity is enhanced by 5 uM Zn(2+) and inhibited by 100 uM Zn(2+). Subunit of heteromeric glycine-gated chloride channels. Plays an important role in the down-regulation of neuronal excitability. Contributes to the generation of inhibitory postsynaptic currents. Channel activity is potentiated by ethanol. Potentiation of channel activity by intoxicating levels of ethanol contribute to the sedative effects of ethanol. In Mus musculus (Mouse), this protein is Glycine receptor subunit alpha-1 (Glra1).